A 181-amino-acid polypeptide reads, in one-letter code: MVSSCCGSVSSEQSCGLENCCRPSCCQTTCCRTTCCRPSCCKPQCCQSVCYQPTCCHPSCCISSCCRPYCCESSCCRPCCCQTTCCRTTCCRTTCCCPSCCVSSCCRPQCCQSVCCQPTCCRPSCCISSCCHPSCCESSCCRPCCCVRPVCGRVSCHTTCYRPTCVISTCPRPLCCASSCC.

26 consecutive repeat copies span residues 5 to 9, 20 to 24, 25 to 29, 30 to 34, 35 to 39, 40 to 44, 45 to 49, 55 to 59, 60 to 64, 65 to 69, 70 to 74, 75 to 79, 80 to 84, 85 to 89, 90 to 94, 95 to 99, 100 to 104, 105 to 109, 110 to 114, 115 to 119, 120 to 124, 125 to 129, 130 to 134, 135 to 139, 140 to 144, and 145 to 149. A 26 X 5 AA repeats of C-C-[GRQVCHIEK]-[SPTR]-[VSTQYC] region spans residues 5 to 154; it reads CCGSVSSEQS…CCVRPVCGRV (150 aa).

The protein belongs to the KRTAP type 4 family. As to quaternary structure, interacts with hair keratins. As to expression, expressed in the hair follicles.

In the hair cortex, hair keratin intermediate filaments are embedded in an interfilamentous matrix, consisting of hair keratin-associated proteins (KRTAP), which are essential for the formation of a rigid and resistant hair shaft through their extensive disulfide bond cross-linking with abundant cysteine residues of hair keratins. The matrix proteins include the high-sulfur and high-glycine-tyrosine keratins. The sequence is that of Keratin-associated protein 4-5 (KRTAP4-5) from Homo sapiens (Human).